We begin with the raw amino-acid sequence, 595 residues long: Estrogen receptor (595 aa).

Residues 1–184 are modulating (transactivation AF-1); mediates interaction with MACROD1; the sequence is MTMTLHTKAS…AMESAKETRY (184 aa). Residue Ser10 is glycosylated (O-linked (GlcNAc) serine). The required for interaction with NCOA1 stretch occupies residues 35-47; it reads LERPLGEVYVDGS. Residues 35 to 174 are interaction with DDX5; self-association; the sequence is LERPLGEVYV…LASTGDKGSM (140 aa). Phosphoserine; by CDK2 is present on residues Ser104 and Ser106. Position 118 is a phosphoserine (Ser118). A disordered region spans residues 149-173; it reads FYRPTSDNRRQSGRERLASTGDKGS. Residues 154-165 are compositionally biased toward basic and acidic residues; it reads SDNRRQSGRERL. Phosphoserine; by CK2 is present on Ser167. NR C4-type zinc fingers lie at residues 185 to 205 and 221 to 245; these read CAVC…CEGC and CPAT…LRKC. Residues 185 to 250 constitute a DNA-binding region (nuclear receptor); the sequence is CAVCNDYASG…RLRKCYEVGM (66 aa). A mediates interaction with DNTTIP2 region spans residues 185–310; the sequence is CAVCNDYASG…TKKNSPALSL (126 aa). The hinge stretch occupies residues 251–310; the sequence is MKGGIRKDRRGGRMLKHKRQRDEGEGRNEVGSSGDVRASNLWPSPLLIKHTKKNSPALSL. Residues 257-269 are compositionally biased toward basic residues; the sequence is KDRRGGRMLKHKR. Positions 257-287 are disordered; sequence KDRRGGRMLKHKRQRDEGEGRNEVGSSGDVR. At Arg260 the chain carries Asymmetric dimethylarginine; by PRMT1. The interval 262–595 is interaction with AKAP13; it reads GRMLKHKRQR…EEAGAFPTTV (334 aa). The self-association stretch occupies residues 264–595; the sequence is MLKHKRQRDE…EEAGAFPTTV (332 aa). One can recognise an NR LBD domain in the interval 311-547; that stretch reads TADQMVSALL…DLLLEMLDAH (237 aa). The segment at 311 to 595 is transactivation AF-2; the sequence is TADQMVSALL…EEAGAFPTTV (285 aa). 17beta-estradiol-binding residues include Glu353 and Arg394. Cys447 carries the S-palmitoyl cysteine lipid modification. His524 contributes to the 17beta-estradiol binding site. Tyr537 is subject to Phosphotyrosine; by Tyr-kinases. O-linked (GlcNAc) threonine glycosylation occurs at Thr571.

This sequence belongs to the nuclear hormone receptor family. NR3 subfamily. As to quaternary structure, binds DNA as a homodimer. Can form a heterodimer with ESR2. Interacts with coactivator NCOA5. Interacts with PELP1, the interaction is enhanced by 17-beta-estradiol; the interaction increases ESR1 transcriptional activity. Interacts with NCOA7; the interaction is ligand-inducible. Interacts with AKAP13, CUEDC2, HEXIM1, KDM5A, MAP1S, SMARD1, and UBE1C. Interacts with MUC1; the interaction is stimulated by 7 beta-estradiol (E2) and enhances ESR1-mediated transcription. Interacts with DNTTIP2, and UIMC1. Interacts with KMT2D/MLL2. Interacts with ATAD2; the interaction is enhanced by estradiol. Interacts with KIF18A and LDB1. Interacts with RLIM (via its C-terminus). Interacts with MACROD1. Interacts with SH2D4A and PLCG. Interacts with SH2D4A; the interaction blocks binding to PLCG and inhibits estrogen-induced cell proliferation. Interacts with DYNLL1. Interacts with CCDC62; the interaction requires estradiol and appears to enhance the transcription of target genes. Interacts with NR2C1; the interaction prevents homodimerization of ESR1 and suppresses its transcriptional activity and cell growth. Interacts with DNAAF4. Interacts with PRMT2. Interacts with RBFOX2. Interacts with EP300; the interaction is estrogen-dependent and enhanced by CITED1. Interacts with CITED1; the interaction is estrogen-dependent. Interacts with FAM120B, FOXL2, PHB2 and SLC30A9. Interacts with coactivators NCOA3 and NCOA6. Interacts with STK3/MST2 only in the presence of SAV1 and vice-versa. Binds to CSNK1D. Interacts with NCOA2; NCOA2 can interact with ESR1 AF-1 and AF-2 domains simultaneously and mediate their transcriptional synergy. Interacts with DDX5. Interacts with NCOA1; the interaction seems to require a self-association of N-terminal and C-terminal regions. Interacts with ZNF366, DDX17, NFKB1, RELA, SP1 and SP3. Interacts with NRIP1. Interacts with GPER1; the interaction occurs in an estrogen-dependent manner. Interacts with CLOCK and the interaction is stimulated by estrogen. Interacts with TRIP4 (ufmylated); estrogen dependent. Interacts with LMTK3; the interaction phosphorylates ESR1 (in vitro) and protects it against proteasomal degradation. Interacts with CCAR2 (via N-terminus) in a ligand-independent manner. Interacts with ZFHX3. Interacts with SFR1 in a ligand-dependent and -independent manner. Interacts with DCAF13, LATS1 and DCAF1; regulates ESR1 ubiquitination and ubiquitin-mediated proteasomal degradation. Interacts (via DNA-binding domain) with POU4F2 (C-terminus); this interaction increases the estrogen receptor ESR1 transcriptional activity in a DNA- and ligand 17-beta-estradiol-independent manner. Interacts with ESRRB isoform 1. Interacts with UBE3A and WBP2. Interacts with GTF2B. Interacts with RBM39. In the absence of hormonal ligand, interacts with TACC1. Interacts with PI3KR1 or PI3KR2 and PTK2/FAK1. Interacts with SRC. Interacts with BAG1; the interaction is promoted in the absence of estradiol (17-beta-estradiol/E2). Interacts with and ubiquitinated by STUB1; the interaction is promoted in the absence of estradiol (17-beta-estradiol/E2). Interacts with NEDD8. Post-translationally, ubiquitinated; regulated by LATS1 via DCAF1 it leads to ESR1 proteasomal degradation. Deubiquitinated by OTUB1. Ubiquitinated by STUB1/CHIP; in the CA1 hippocampal region following loss of endogenous circulating estradiol (17-beta-estradiol/E2). Ubiquitinated by UBR5, leading to its degradation: UBR5 specifically recognizes and binds ligand-bound ESR1 when it is not associated with coactivators (NCOAs). In presence of NCOAs, the UBR5-degron is not accessible, preventing its ubiquitination and degradation. In terms of processing, phosphorylated by cyclin A/CDK2 and CK1. Phosphorylation probably enhances transcriptional activity. Dephosphorylation at Ser-118 by PPP5C inhibits its transactivation activity. Phosphorylated by LMTK3 (in vitro). Palmitoylated at Cys-447 by ZDHHC7 and ZDHHC21. Palmitoylation is required for plasma membrane targeting and for rapid intracellular signaling via ERK and AKT kinases and cAMP generation, but not for signaling mediated by the nuclear hormone receptor. Post-translationally, dimethylated by PRMT1 at Arg-260. The methylation may favor cytoplasmic localization. Demethylated by JMJD6 at Arg-260.

It localises to the nucleus. Its subcellular location is the cytoplasm. The protein resides in the golgi apparatus. It is found in the cell membrane. In terms of biological role, nuclear hormone receptor. The steroid hormones and their receptors are involved in the regulation of eukaryotic gene expression and affect cellular proliferation and differentiation in target tissues. Ligand-dependent nuclear transactivation involves either direct homodimer binding to a palindromic estrogen response element (ERE) sequence or association with other DNA-binding transcription factors, such as AP-1/c-Jun, c-Fos, ATF-2, Sp1 and Sp3, to mediate ERE-independent signaling. Ligand binding induces a conformational change allowing subsequent or combinatorial association with multiprotein coactivator complexes through LXXLL motifs of their respective components. Mutual transrepression occurs between the estrogen receptor (ER) and NF-kappa-B in a cell-type specific manner. Decreases NF-kappa-B DNA-binding activity and inhibits NF-kappa-B-mediated transcription from the IL6 promoter and displace RELA/p65 and associated coregulators from the promoter. Recruited to the NF-kappa-B response element of the CCL2 and IL8 promoters and can displace CREBBP. Present with NF-kappa-B components RELA/p65 and NFKB1/p50 on ERE sequences. Can also act synergistically with NF-kappa-B to activate transcription involving respective recruitment adjacent response elements; the function involves CREBBP. Can activate the transcriptional activity of TFF1. Also mediates membrane-initiated estrogen signaling involving various kinase cascades. Essential for MTA1-mediated transcriptional regulation of BRCA1 and BCAS3. Maintains neuronal survival in response to ischemic reperfusion injury when in the presence of circulating estradiol (17-beta-estradiol/E2). This Felis catus (Cat) protein is Estrogen receptor (ESR1).